A 312-amino-acid polypeptide reads, in one-letter code: tRNA-cytidine(32) 2-sulfurtransferase (312 aa).

Positions 47–52 (SGGKDS) match the PP-loop motif motif. Cysteine 122, cysteine 125, and cysteine 213 together coordinate [4Fe-4S] cluster.

Belongs to the TtcA family. In terms of assembly, homodimer. The cofactor is Mg(2+). [4Fe-4S] cluster serves as cofactor.

The protein localises to the cytoplasm. The enzyme catalyses cytidine(32) in tRNA + S-sulfanyl-L-cysteinyl-[cysteine desulfurase] + AH2 + ATP = 2-thiocytidine(32) in tRNA + L-cysteinyl-[cysteine desulfurase] + A + AMP + diphosphate + H(+). The protein operates within tRNA modification. Functionally, catalyzes the ATP-dependent 2-thiolation of cytidine in position 32 of tRNA, to form 2-thiocytidine (s(2)C32). The sulfur atoms are provided by the cysteine/cysteine desulfurase (IscS) system. This is tRNA-cytidine(32) 2-sulfurtransferase from Shewanella frigidimarina (strain NCIMB 400).